The sequence spans 160 residues: Eukaryotic translation initiation factor 5A-1/2 (160 aa).

Residues 1 to 12 (MSDEEHHFESKA) are compositionally biased toward basic and acidic residues. The tract at residues 1–21 (MSDEEHHFESKADAGASKTYP) is disordered. Lys52 carries the post-translational modification Hypusine.

Belongs to the eIF-5A family. Post-translationally, lys-52 undergoes hypusination, a unique post-translational modification that consists in the addition of a butylamino group from spermidine to lysine side chain, leading to the formation of the unusual amino acid hypusine. eIF-5As are the only known proteins to undergo this modification, which is essential for their function.

In terms of biological role, translation factor that promotes translation elongation and termination, particularly upon ribosome stalling at specific amino acid sequence contexts. Binds between the exit (E) and peptidyl (P) site of the ribosome and promotes rescue of stalled ribosome: specifically required for efficient translation of polyproline-containing peptides as well as other motifs that stall the ribosome. Acts as a ribosome quality control (RQC) cofactor by joining the RQC complex to facilitate peptidyl transfer during CAT tailing step. This Solanum tuberosum (Potato) protein is Eukaryotic translation initiation factor 5A-1/2 (EIF5A1).